The chain runs to 519 residues: Na(+)/H(+) exchange regulatory cofactor NHE-RF3 (519 aa).

One can recognise a PDZ 1 domain in the interval 9-90; that stretch reads ECKLSKQEGQ…SVTLLVLDGD (82 aa). Ser108, Ser148, Ser192, Ser250, Ser334, and Ser348 each carry phosphoserine. PDZ domains are found at residues 128–215 and 243–323; these read EPCA…VDKE and VVVI…LDKE. The segment at 348–374 is disordered; it reads SVKEGPAPIPAPLEATGSEPTEDAEGH. One can recognise a PDZ 4 domain in the interval 378 to 458; that stretch reads LCRLLKEDDS…HVTLLVCGKM (81 aa). A phosphothreonine mark is found at Thr451 and Thr488. Residues 479 to 519 form a disordered region; sequence VAGPDEKGETSAESEHDAHPAKDRTLSTASHSSSNSEDTEM. Basic and acidic residues predominate over residues 482-503; that stretch reads PDEKGETSAESEHDAHPAKDRT. Residues Ser489 and Ser492 each carry the phosphoserine modification. The residue at position 503 (Thr503) is a Phosphothreonine. Residues 505–519 are compositionally biased toward low complexity; sequence STASHSSSNSEDTEM. Ser508, Ser510, Ser511, Ser512, and Ser514 each carry phosphoserine.

Belongs to the NHER family. In terms of assembly, interacts with PDZK1IP1 and ABCC2. Binds to the C-terminal region of SLC26A3. Interacts (via C-terminal PDZ domain) with SLC26A6 (via C-terminal domain). Interacts (via C-terminal PDZ domain) with SLC9A3 (via C-terminal domain). Component of a complex, composed of PDZK1, SYNGAP1, KLHL17 and NMDA receptors. Interacts (via PDZ1 domain) directly with KLHL17; the interaction is important for integrity of actin cytoskeleton structures in neurons. Forms a heterodimeric complex with NHERF1. Interacts with AKAP2, BCR, CFTR, SLCO1A1, SLC22A12, SLC22A4, SLC22A5, SLC26A6, NHERF2 and SLC17A1. Interacts (via the first PDZ domain) with PTGIR (via non-isoprenylated C-terminus). Interacts (via PDZ domains 1 and 3) with SCARB1 (C-terminal domain). Interacts (via PDZ domains 1 and 3) with SLC5A8 (via PDZ-binding motif); interaction increases nicotinate transport activity of SLC5A8. Expressed in kidney, liver, small intestine. brain, lung, and testis (at protein level).

Its subcellular location is the membrane. The protein localises to the cell membrane. Functionally, a scaffold protein that connects plasma membrane proteins and regulatory components, regulating their surface expression in epithelial cells apical domains. May be involved in the coordination of a diverse range of regulatory processes for ion transport and second messenger cascades. In complex with NHERF1, may cluster proteins that are functionally dependent in a mutual fashion and modulate the trafficking and the activity of the associated membrane proteins. May play a role in the cellular mechanisms associated with multidrug resistance through its interaction with ABCC2 and PDZK1IP1. May potentiate the CFTR chloride channel activity. Required for normal cell-surface expression of SCARB1. Plays a role in maintaining normal plasma cholesterol levels via its effects on SCARB1. Plays a role in the normal localization and function of the chloride-anion exchanger SLC26A6 to the plasma membrane in the brush border of the proximal tubule of the kidney. May be involved in the regulation of proximal tubular Na(+)-dependent inorganic phosphate cotransport therefore playing an important role in tubule function. This chain is Na(+)/H(+) exchange regulatory cofactor NHE-RF3 (Pdzk1), found in Mus musculus (Mouse).